Reading from the N-terminus, the 232-residue chain is Large ribosomal subunit protein uL1 (232 aa).

This sequence belongs to the universal ribosomal protein uL1 family. As to quaternary structure, part of the 50S ribosomal subunit.

In terms of biological role, binds directly to 23S rRNA. The L1 stalk is quite mobile in the ribosome, and is involved in E site tRNA release. Its function is as follows. Protein L1 is also a translational repressor protein, it controls the translation of the L11 operon by binding to its mRNA. In Francisella tularensis subsp. holarctica (strain LVS), this protein is Large ribosomal subunit protein uL1.